Reading from the N-terminus, the 454-residue chain is Serine/threonine-protein phosphatase C23G10.1 (454 aa).

Residues Asp196, His198, Asp224, and Asn256 each coordinate Mn(2+). His257 (proton donor) is an active-site residue. His308 and His382 together coordinate Mn(2+).

The protein belongs to the PPP phosphatase family. PP-1 subfamily. Requires Mn(2+) as cofactor.

It catalyses the reaction O-phospho-L-seryl-[protein] + H2O = L-seryl-[protein] + phosphate. The catalysed reaction is O-phospho-L-threonyl-[protein] + H2O = L-threonyl-[protein] + phosphate. In Caenorhabditis elegans, this protein is Serine/threonine-protein phosphatase C23G10.1.